Reading from the N-terminus, the 955-residue chain is 2-oxoglutarate dehydrogenase E1 component (955 aa).

It belongs to the alpha-ketoglutarate dehydrogenase family. Homodimer. Part of the 2-oxoglutarate dehydrogenase (OGDH) complex composed of E1 (2-oxoglutarate dehydrogenase), E2 (dihydrolipoamide succinyltransferase) and E3 (dihydrolipoamide dehydrogenase); the complex contains multiple copies of the three enzymatic components (E1, E2 and E3). The cofactor is thiamine diphosphate.

It catalyses the reaction N(6)-[(R)-lipoyl]-L-lysyl-[protein] + 2-oxoglutarate + H(+) = N(6)-[(R)-S(8)-succinyldihydrolipoyl]-L-lysyl-[protein] + CO2. Its function is as follows. E1 component of the 2-oxoglutarate dehydrogenase (OGDH) complex which catalyzes the decarboxylation of 2-oxoglutarate, the first step in the conversion of 2-oxoglutarate to succinyl-CoA and CO(2). In Bacillus cereus (strain ZK / E33L), this protein is 2-oxoglutarate dehydrogenase E1 component.